We begin with the raw amino-acid sequence, 514 residues long: Serine/threonine protein phosphatase PstP (514 aa).

The Cytoplasmic segment spans residues 1–302 (MARVTLVLRY…RPRWSGRRLA (302 aa)). One can recognise a PPM-type phosphatase domain in the interval 9 to 238 (RYAARSDRGL…DNVTVVVADV (230 aa)). Residues Asp38, Gly39, Asp118, Ser160, Asp191, and Asp229 each contribute to the Mn(2+) site. Residues 303 to 323 (FVVALVTVLMTAGLLIGRAII) form a helical membrane-spanning segment. Topologically, residues 324 to 514 (RSNYYVADYA…QPGIDCRAAA (191 aa)) are extracellular. The segment at 420–514 (LLPPCPAPRA…QPGIDCRAAA (95 aa)) is disordered. Over residues 440–480 (TTSETTEPNVTSSPASPSPTTSASAPTGTTPAIPTSASPAA) the composition is skewed to low complexity.

The cofactor is Mn(2+).

The protein localises to the cell membrane. The catalysed reaction is O-phospho-L-seryl-[protein] + H2O = L-seryl-[protein] + phosphate. It catalyses the reaction O-phospho-L-threonyl-[protein] + H2O = L-threonyl-[protein] + phosphate. Plays an important role in regulating cell division and growth by reversible phosphorylation signaling. May play important roles in regulating cellular metabolism and signaling pathways, which could mediate the growth and development of the cell. Plays a role in establishing and maintaining infection. In Mycobacterium tuberculosis (strain CDC 1551 / Oshkosh), this protein is Serine/threonine protein phosphatase PstP (pstP).